The primary structure comprises 398 residues: O-methyltransferase mpaG (398 aa).

Ser144 contributes to the (4E,8E)-10-(4,6-dihydroxy-7-methyl-3-oxo-1,3-dihydro-2-benzofuran-5-yl)-4,8-dimethyldeca-4,8-dienoate binding site. Ser144 contributes to the 4-farnesyl-3,5-dihydroxy-6-methylphthalide binding site. Ser144 is a binding site for 6-O-desmethylmycophenolate. Residue Asn197 coordinates S-adenosyl-L-homocysteine. Residue Tyr199 participates in (4E,8E)-10-(4,6-dihydroxy-7-methyl-3-oxo-1,3-dihydro-2-benzofuran-5-yl)-4,8-dimethyldeca-4,8-dienoate binding. Tyr199 lines the 4-farnesyl-3,5-dihydroxy-6-methylphthalide pocket. 6-O-desmethylmycophenolate is bound at residue Tyr199. S-adenosyl-L-homocysteine-binding residues include Tyr203, Asp237, Gly239, His244, Asp245, Asp264, and Arg265. Residue Asp264 participates in S-adenosyl-L-methionine binding. Positions 265 and 267 each coordinate (4E,8E)-10-(4,6-dihydroxy-7-methyl-3-oxo-1,3-dihydro-2-benzofuran-5-yl)-4,8-dimethyldeca-4,8-dienoate. Residue Arg265 coordinates 6-O-desmethylmycophenolate. Asp286, Ile287, and His302 together coordinate S-adenosyl-L-homocysteine. Ser303 serves as a coordination point for (4E,8E)-10-(4,6-dihydroxy-7-methyl-3-oxo-1,3-dihydro-2-benzofuran-5-yl)-4,8-dimethyldeca-4,8-dienoate. Ser303 is a binding site for 4-farnesyl-3,5-dihydroxy-6-methylphthalide. Ser303 contributes to the 6-O-desmethylmycophenolate binding site. His306 functions as the Proton acceptor in the catalytic mechanism. Residues Glu335 and Glu362 contribute to the active site.

The protein belongs to the class I-like SAM-binding methyltransferase superfamily. Cation-independent O-methyltransferase family. COMT subfamily. In terms of assembly, homodimer.

The protein localises to the cytoplasm. The protein resides in the cytosol. The enzyme catalyses (4E,8E)-10-(4,6-dihydroxy-7-methyl-3-oxo-1,3-dihydro-2-benzofuran-5-yl)-4,8-dimethyldeca-4,8-dienoate + S-adenosyl-L-methionine = (4E,8E)-10-(4-hydroxy-6-methoxy-7-methyl-3-oxo-1,3-dihydro-2-benzofuran-5-yl)-4,8-dimethyldeca-4,8-dienoate + S-adenosyl-L-homocysteine + H(+). It catalyses the reaction 4-farnesyl-3,5-dihydroxy-6-methylphthalide + S-adenosyl-L-methionine = 4-farnesyl-3,5-dihydroxy-6-methoxylphthalide + S-adenosyl-L-homocysteine + H(+). It carries out the reaction 6-O-desmethylmycophenolate + S-adenosyl-L-methionine = mycophenolate + S-adenosyl-L-homocysteine + H(+). It functions in the pathway secondary metabolite biosynthesis; terpenoid biosynthesis. In terms of biological role, O-methyltransferase; part of the gene cluster that mediates the biosynthesis of mycophenolic acid (MPA), the first isolated antibiotic natural product in the world obtained from a culture of Penicillium brevicompactum in 1893. MpaG methylates farnesyl-DHMP-3C (FDHMP-3C) to yield MFDHMP-3C. The first step of the pathway is the synthesis of 5-methylorsellinic acid (5MOA) by the cytosolic polyketide synthase mpaC. 5MOA is then converted to the phthalide compound 5,7-dihydroxy-4,6-dimethylphthalide (DHMP) by the endoplasmic reticulum-bound cytochrome P450 monooxygenase mpaDE. MpaDE first catalyzes hydroxylation of 5-MOA to 4,6-dihydroxy-2-(hydroxymethyl)-3-methylbenzoic acid (DHMB). MpaDE then acts as a lactone synthase that catalyzes the ring closure to convert DHMB into DHMP. The next step is the prenylation of DHMP by the Golgi apparatus-associated prenyltransferase mpaA to yield farnesyl-DHMP (FDHMP). The ER-bound oxygenase mpaB then mediates the oxidative cleavage the C19-C20 double bond in FDHMP to yield FDHMP-3C via a mycophenolic aldehyde intermediate. The O-methyltransferase mpaG catalyzes the methylation of FDHMP-3C to yield MFDHMP-3C. MpaG and mpaB can also switch the order in which they act and, in this case, the conversion of FDHMP to MFDHMP-3C can take place via 5-O-methyl-FDHMP (MFDHMP). After the cytosolic methylation of FDHMP-3C, MFDHMP-3C enters into peroxisomes probably via free diffusion due to its low molecular weight. Upon a peroxisomal CoA ligation reaction, catalyzed by a beta-oxidation component enzyme acyl-CoA ligase ACL891, MFDHMP-3C-CoA would then be restricted to peroxisomes for the following beta-oxidation pathway steps. The peroxisomal beta-oxidation machinery than converts MFDHMP-3C-CoA into MPA_CoA, via a beta-oxidation chain-shortening process. Finally mpaH acts as a peroxisomal acyl-CoA hydrolase with high substrate specificity toward MPA-CoA to release the final product MPA. MpaH can also hydrolyze DMMPA-CoA to release demethylmycophenolic acid (DMMPA) that is further converted to MPA by mpaG. This chain is O-methyltransferase mpaG, found in Penicillium brevicompactum.